A 62-amino-acid chain; its full sequence is Large ribosomal subunit protein eL24 (62 aa).

Cys-6, Cys-9, Cys-32, and Cys-36 together coordinate Zn(2+). A C4-type zinc finger spans residues 6–36 (CSFCGADIPPGYGIMYVRSDGTVQRFCSRKC).

It belongs to the eukaryotic ribosomal protein eL24 family. In terms of assembly, part of the 50S ribosomal subunit. Forms a cluster with proteins L3 and L14. The cofactor is Zn(2+).

Functionally, binds to the 23S rRNA. The sequence is that of Large ribosomal subunit protein eL24 from Pyrobaculum calidifontis (strain DSM 21063 / JCM 11548 / VA1).